Consider the following 169-residue polypeptide: Ribosome maturation factor RimM (169 aa).

The PRC barrel domain maps to 97 to 169 (EDEVYFKDLI…KIVVDWEYDY (73 aa)).

Belongs to the RimM family. As to quaternary structure, binds ribosomal protein uS19.

It localises to the cytoplasm. An accessory protein needed during the final step in the assembly of 30S ribosomal subunit, possibly for assembly of the head region. Essential for efficient processing of 16S rRNA. May be needed both before and after RbfA during the maturation of 16S rRNA. It has affinity for free ribosomal 30S subunits but not for 70S ribosomes. This Francisella tularensis subsp. tularensis (strain FSC 198) protein is Ribosome maturation factor RimM.